A 46-amino-acid chain; its full sequence is Short transmembrane mitochondrial protein 1 (46 aa).

A helical membrane pass occupies residues 7 to 23 (GFTLGNVVGMYLAQNYE).

It belongs to the STMP1 family. In terms of tissue distribution, widely expressed. Expressed more abundantly in brain compared with other tissues such as heart, muscle and liver.

The protein resides in the mitochondrion inner membrane. The protein localises to the mitochondrion outer membrane. It localises to the mitochondrion intermembrane space. Its function is as follows. Microprotein involved in mitochondrial respiratory chain complex III (ubiquinol-cytochrome c oxidoreductase) and complex IV (mitochondrial cytochrome c oxidase complex) assembly. Required for the formation of mitochondrial supercomplexes (SCs). Also required for the activation of the NLRP3 inflammasome. The protein is Short transmembrane mitochondrial protein 1 of Danio rerio (Zebrafish).